The following is a 60-amino-acid chain: Cytochrome c oxidase subunit 7, mitochondrial (60 aa).

Topologically, residues 2 to 29 are mitochondrial matrix; sequence ANKVIQLQKIFQSSTKPLWWRHPRSALY. A helical transmembrane segment spans residues 30-53; that stretch reads LYPFYAIFAVAVVTPLLYIPNAIR. Over 54 to 60 the chain is Mitochondrial intermembrane; the sequence is GIKAKKA.

It belongs to the cytochrome c oxidase VIIa family. In terms of assembly, component of the cytochrome c oxidase (complex IV, CIV), a multisubunit enzyme composed of 12 subunits. The complex is composed of a catalytic core of 3 subunits COX1, COX2 and COX3, encoded in the mitochondrial DNA, and 9 supernumerary subunits COX4, COX5A (or COX5B), COX6, COX7, COX8, COX9, COX12, COX13 and COX26, which are encoded in the nuclear genome. The complex exists as a monomer or a dimer and forms supercomplexes (SCs) in the inner mitochondrial membrane with a dimer of ubiquinol-cytochrome c oxidoreductase (cytochrome b-c1 complex, complex III, CIII), resulting in 2 different assemblies (supercomplexes III(2)IV and III(2)IV(2)).

The protein resides in the mitochondrion inner membrane. It functions in the pathway energy metabolism; oxidative phosphorylation. Its function is as follows. Component of the cytochrome c oxidase, the last enzyme in the mitochondrial electron transport chain which drives oxidative phosphorylation. The respiratory chain contains 3 multisubunit complexes succinate dehydrogenase (complex II, CII), ubiquinol-cytochrome c oxidoreductase (cytochrome b-c1 complex, complex III, CIII) and cytochrome c oxidase (complex IV, CIV), that cooperate to transfer electrons derived from NADH and succinate to molecular oxygen, creating an electrochemical gradient over the inner membrane that drives transmembrane transport and the ATP synthase. Cytochrome c oxidase is the component of the respiratory chain that catalyzes the reduction of oxygen to water. Electrons originating from reduced cytochrome c in the intermembrane space (IMS) are transferred via the dinuclear copper A center (CU(A)) of COX2 and heme A of COX1 to the active site in COX1, a binuclear center (BNC) formed by heme A3 and copper B (CU(B)). The BNC reduces molecular oxygen to 2 water molecules using 4 electrons from cytochrome c in the IMS and 4 protons from the mitochondrial matrix. The protein is Cytochrome c oxidase subunit 7, mitochondrial (COX7) of Saccharomyces cerevisiae (strain ATCC 204508 / S288c) (Baker's yeast).